The chain runs to 304 residues: Ferredoxin fas2 (304 aa).

Residues K2 to D29 form the 4Fe-4S ferredoxin-type domain. Positions 10, 16, and 54 each coordinate [3Fe-4S] cluster. Residues M66 to R304 are transketolase-like.

In the C-terminal section; belongs to the transketolase family. [3Fe-4S] cluster is required as a cofactor.

Functionally, plays a role in electron transfer. The fas operon encodes genes involved in cytokinin production and in host plant fasciation (leafy gall). This Rhodococcoides fascians (Rhodococcus fascians) protein is Ferredoxin fas2 (fas2).